The sequence spans 83 residues: Mitochondrial import inner membrane translocase subunit Tim8 B (83 aa).

Position 2 is an N-acetylalanine (Ala-2). A Twin CX3C motif motif is present at residues 36–59; it reads CWDKCVEKPGNRLDSRTENCLSSC. 2 disulfide bridges follow: Cys-36/Cys-59 and Cys-40/Cys-55.

The protein belongs to the small Tim family. As to quaternary structure, heterohexamer; possibly composed of 3 copies of TIMM8B and 3 copies of TIMM13, named soluble 70 kDa complex. Associates with the TIM22 complex, whose core is composed of TIMM22.

The protein localises to the mitochondrion inner membrane. In terms of biological role, probable mitochondrial intermembrane chaperone that participates in the import and insertion of some multi-pass transmembrane proteins into the mitochondrial inner membrane. Also required for the transfer of beta-barrel precursors from the TOM complex to the sorting and assembly machinery (SAM complex) of the outer membrane. Acts as a chaperone-like protein that protects the hydrophobic precursors from aggregation and guide them through the mitochondrial intermembrane space. This chain is Mitochondrial import inner membrane translocase subunit Tim8 B (TIMM8B), found in Bos taurus (Bovine).